The sequence spans 232 residues: Thrombin-like enzyme BjussuSP-1 (232 aa).

Residues 1–223 enclose the Peptidase S1 domain; the sequence is VLGGDECDIN…YTDWIQRNIA (223 aa). Disulfide bonds link Cys-7-Cys-138, Cys-25-Cys-41, Cys-73-Cys-230, Cys-117-Cys-184, Cys-149-Cys-163, and Cys-174-Cys-199. His-40 functions as the Charge relay system in the catalytic mechanism. Asn-77 is a glycosylation site (N-linked (GlcNAc...) asparagine). Asp-85 functions as the Charge relay system in the catalytic mechanism. Asn-129 carries an N-linked (GlcNAc...) asparagine glycan. Catalysis depends on Ser-178, which acts as the Charge relay system.

This sequence belongs to the peptidase S1 family. Snake venom subfamily. Monomer. N-glycosylated. Contains sialic acid residues. Deglycosylation reduces in 50% the formation of fibrin clot. Expressed by the venom gland.

Its subcellular location is the secreted. Its activity is regulated as follows. Inhibited by leupeptin, heparin, and 1.10-phenantroline. Its function is as follows. Thrombin-like enzyme that shows clotting activity upon human plasma. Shows specific fibrinogenolytic activity for Aalpha chain (FGA). Hydrolyzes fibrin, BAPNA and TAME, as well as chromogenic artificial substrates of the blood coagulation cascasde: S-27654 for factor X (F10), S-2302 for kallikrein (KLK), factor XIa (F11), and XIIa (F12), and S-2266 for kallikrein and factor XIa (F11). Subcutaneous injection into mice induces a mild edema. Intravenous and intramuscular injection reduce plasma fibrinogen concentration and increase the levels of fibrin(ogen) degradation products. Intramuscular injection also promotes an increase in the expression of proMMP-9, but is unable to activate it. In Bothrops jararacussu (Jararacussu), this protein is Thrombin-like enzyme BjussuSP-1.